Consider the following 701-residue polypeptide: CRS2-associated factor 1, chloroplastic (701 aa).

Residues M1 to R77 constitute a chloroplast transit peptide. CRM domains follow at residues E183 to I279 and D301 to L397. The segment at G581–F603 is CRS2 binding.

Interacts with CRS2 and RNA. Part of large ribonucleo-protein complexes that include group IIB introns, CRS2 and CAF1.

The protein localises to the plastid. Its subcellular location is the chloroplast stroma. Functionally, required for the splicing of group IIB introns in chloroplasts. Forms splicing particles with CRS2. Interacts with RNA and confers intron specificity of the splicing particles. The sequence is that of CRS2-associated factor 1, chloroplastic from Oryza sativa subsp. japonica (Rice).